The chain runs to 55 residues: Seripauperin-7 (55 aa).

Positions 1-20 (MVKLTSIAAGVAAIAAGASA) are cleaved as a signal peptide.

The protein belongs to the SRP1/TIP1 family. Seripauperin subfamily.

The chain is Seripauperin-7 (PAU7) from Saccharomyces cerevisiae (strain ATCC 204508 / S288c) (Baker's yeast).